We begin with the raw amino-acid sequence, 5082 residues long: MSRFSCIFPTLTDGYVPNPDHTRAAGRRTYRIDLSGWKAPGSETESLILAAWGLVLSSYVGTDEVAFYVVPTTGPDTTALAELKVEGDMPRQSLTYAAHQLLHPGLVGAGQVSGETANTIITFANDIESLFVTQTEESFLSLHVYRDEQGHISLSLTYYLSLLTDAQAANVGTAMAQALAEVGTCDNDKLVKDLSLMSPAHLEHIWRFNADVPGIWEECFHDVIERHAANRPHSLAVDAWDTKLTYTDLVREARLLAAYLQRRGVGPGSVVPISFERSGAALVAMLAVSKAGGAFVSVPPNLPAGRVDAILEVIEAPFVVTWTKYESFWAERLPTLPIDNYPKPAADATVEALGKPEDLFYVIFTSGSTGRPKGCMLSHTNWLNGALRNAPSWKYGPESRVLQMLSHTFDMSLLEICTSLGSGSCVCVPRPEEIETSISDAINRWQVNHVIMTPSLARALRPDDVPGLKTMCLGGEAFPKEIVTMWSERINLWQFYGPSECSINSSSWPITRPDADPLNIGPPNSAACWVVDVHDYNKLVPVGAIGELLVSGPIVGMGYLKNPVKTAEAFLEEVGFVAKDDPQFGGFRFYRTGDLVRWNSDGTITFCGRADTQVKLNGQRLELAEVEYQLGLEAGVQYAIAMAPQAGLCKNNLIAILTVKGTSTGTQDTAADEIPLLDRRDPIVQETVKKLRSQLQHALPRYMVPTIWAFVGRMPMSASGKIDRRMSQETFDAITGRSLEAEEHAFGLSRLEQKIQLAWAEALGLSAAEVGLQQPFVALGGDSIKALDAVARCRARQIKISMVHILSCEGVREAASLAEVQETPAQQVAEMAVDYSNLWTRLSNDYDLDKLGVTQVEEVENVFPCTTMQEGMFLGQIRRPGAYHMRFFHRVQLKGGCLPTVERIQQAWASLVERHPSLRTVFVDDLSPEAIYHSIVLRSVPMEVRMREVPRDLSAEAALAIFTEELVPFRANAPLHRMLLLTCRGRVPYLMLEISHVIMDGYALSVFRREFIRACSSSAPLPRGPDYRMFANYHRTRQTDDSARYWTDYLADCVPCHIPTHAVSAPSDGPPEWPRTLQRRDFGFENSAAFLQRCKERQVTLACAIRAAWALVLRAYTQSEDVCFGYVSSGRNVPVPEVETIFGLCLSMQVCRARLSEASTIASLARKIQEDYVASLPFQHYPLAEAQRGLKQTHGQGLFNTAISMEWVPPSAEDEDALLDLEEIREQDDPTEYDIAISVDVHEGHIKLGFLYWPDLTDFEINHLAEALHGAMNCFASHPDEALNTLSLLQASDVCSALSDGPTLLPLEAVRGNVVSMIDRWVTRQPEGAAIDGWDGSMSYKELHEQSSWVARNLLHQGVRLGDRVLVCADRSSRTVATILGIVRAGCVLVLSNPTDPEKRLQWLAKKCNASLVVADPTYEERLATADAHVLSTTSVCAPAAWDYEFPALDEHDLISILFTSGSTGTPKGILMEHGALATSVFLGHGRTLRFSRHTRMLHFASLTFDAALAEIFTTLAHGGCICVPCEEDRLSDVPGCISRFAVNTAMLTPSVGRLLDPGALPTLQTLIMVGEPMSRLDVERFAPVLDLYNGAGPTETSIMVTIAGPMKPTDEPVNLGYAVAGVRLWVTEAENPNRLAPLGAVGELIVEGRLVTSGYLDDQARTQEAFLPTLPWLPSQHALYRTGDLVRYVDDGSLRYMGRKDTQVKLRGQRIELQEVEYHLRKSLQQAQIVVEMVVPAGKMRAQASLVAFVSGLTAADVESSSACNLEGTIPISQIVLPKSAFQALEEVLPRHMIPSVYYALDTIPLSVNGKADRRRLREMGSLLLASSAAHKNNIEGMSKSVKWTPTLELERTLLGLWAATLGLEAETIHGDDSFFELGGDSVSAMKLVATARDKYKLSLSVPQMFRYPTVCQLAAEVGEPAGQSASSASSTTEEGFTFSTPDDSSTNDGVDDDFLQLATAQLAQLAQEKGKKVDIAALLKQLQGGSSSNKTPSVSSSSSSSSSSKRKKNAAKAESLAEAAAPIPVQFSLLDGGADALDKVRAQAVEHCKITHEDIEDIYPATALQEGMMALTARTPGVYTTTLTGDLSEQVDIARLQYAWGKAAEAHPILRTRIILTDNNTAVQVVQRAKGLPWDTYSLREDNVLPDLTSNMTSGSPLLRLAVVHRQSQPRMLLVAIHHALYDGWSMPLLKQAVEDAYHGRDLRPQPFTPFIKHLIAGKPAAQDFWTTHLDNFVGGVFPKLPSIYHQIQPTERRTRSMTLPTAAPKAQYTMATKIQAAWAVTVSRYVEANDIVFGTVSTGRSAPVPAIDRMVGPTVTTVPVRISLGGQADRVLSLLQRVQEDSWNKLDHEHLGLQHIRRLGESAAAACNFQTLLVIQPREQPDTKYRSTLLSGLQDVAELEGVDTYPLMLVCEPDGASLNLTAVFDRAVLDGATLDRMLAHWELVLTQMWNEPNMAVIDIDAVSCSDKETLMRWNTGETITEGCAHNAVCEWSRRTPHAPAVCAWDGEWTYKELERYSSLIASQISAHGLSSGDFVALYHEKSRWTAAGILAVFKAGAILITLDPAHPTDRIKDILDQARPRLILTSQSLLDVARNLDTPVLSVQFAASQPLPEEWSSLPTICPTLAAYAPFTSGSTGRPKGIPLDHRGLAASTASIARSCLLRPASRVLHFASFAFDASMMEHLIAWHAGGCLCIPDETARQTDLAKCIRDFNVTWAFLTPSCLRLITPDDVPSLQALGLGGESMTSEDITIWSPRLRQIVQLYGPAECCIVAALTEVTKPSENRLIGRPNACRCWVVDPQNPDRLAPIGAVGELLIEGITVGRGYINDPDRTTPAFIRPPKWLQTLYPDDQEPKRLYRTGDLVRYAGVDGKLAFIGRRDGQLKLHGQRIELADVEAHLRSLIPGMQKMVVEMVHSADNQNPFLAAFLEEISTSQKPKEREIGLLHPSQSQCALDVKAIDSALSRTVPQYMIPSMYLHISRLPLSASGKLDRRHLREMVAELPRQSLNEYAAGSGLGVPDRPVTSQEHEMQAIWARVLSLDPNTFGVNDDFFRIGGDSISGMQVSTKCNAAGIHITSADLFRHRTIEQLICHLNTIRTTDSASVLLPTEPVNEWVALAPIQHLFFEVAPEGPNHFNQSLLLRTSRRVSVEELAGGLDVLIGRHSMLRARFCRKDSGQWFQQVKSLDSEPASAFYRLAAHNHITRESLRTLFTAAQMALSIEDGPLLTVDLVELEDGSQLVYLAAHHLIIDLVSWRILHGDLEEYLQTGSLSSATGSVPFLTWTQLQAEYSAEHLTPARALPGFQEANDDFDFMRYWGISSESNTFGQTSTSRFALDRTVTDILFGSANKVMDTRPVEILEAALWYSCNQALPDHPGPSIYVEGHGREPWTDSIDVSGTVGWFTIMSPLVSTPWHHLSRKSMRDFVDVLSYIKDQRRRIPANGWAYFTSRYLNDEGRVAYGRTKPVMEVLFNYMGQYQEMKREDAILQLAGDDIQSGTGASDIAGNVPRFSLIDVTAFTANGCLTFEFTFPQLIQQDARLEQCIKECEHTLVAAASSLSAEGPRKTLTDFPLMSALTYDQLSQCLNHTLPSMGLRAQDVWNIYPCSPVQRGMLLAQLRDRQAYQQRFKFQVMSRGPTEQLSLEKVKDAWTEVINRHDILRTLLLPVSDHSHFDQVVMVPGSLQHLVRGDAMDANPTEGLPHTINITSDSTGAIICEWNVSHALVDAMSIAFIQREVNQALEGSLGQHQNLPQYVEYIKWLTLQDNTEAQAYWQNHLNGVEPCLFPKLTSSPDKVNPEATISAIRATWSRDVRMDELCHKHAITLTNLFHIVWAIVLGAYVGTDEVCFGYTALGRDVPVHRVETLVGPLVNVLATTVRHQEDETILNALLTHQAHLTNSLQHQHYALADVYASLGLVGSQLFNTIVSLQDTSHFDAPDEQRTRLEMLPANDVSEYDVALNIGVDKSTIQLVCSYQTVSLSAEQADALLRTAFHVLDEILRDPTQRFCELEVISPKCKEHLVKWNAGMLAPTHEYIHEKIQGQCRIHNSRQAVFDDLSSRLAARLIRMGVTSEDIIPIYSPKSRWMVIAILGVLKAGAAFTLLEISHPMARLRVICNQIKAPMLIAPASHAVPAANLAPILVVLDNITSLAEERPVSLPAVDIPPAREALAYLIFTSGSTGNPKGVMVTHQNLCSNASIITTSVNMTSDSRVLQFASHAFDGCLWEILGALLAGACLIIPSESENKEDLTGCIERMGVTWAFLTPSVARILKPETLPSLCNLVLGGEPIAASDLEMWRGHVQVVCAYGPTETTILASTTSPSTFPRDGKDIGTPTSSSLWIVDTRNYQTLVPLGATGELLIEGPNVSQGYLGDPEKTNDAFPDAPRWLSQLRKSPTRLYRTGDLVRFDTSTGTIRFVGRKDNQIKFHGQRIELGEIEYHAQFAFSSASTVIVDLITPEQPRQPYIVAFVHQLDAANETTDTNDTLLLPSSEVFRADALAAQNKMHKRLPHYMVPAVFLPLHRLPLSVTGKADRKRLRQCALALSSPELSAYRATASTKRMPSTAAERKMQELVATVLGRDPTEIGMDDSFFYLGGDSVQAMRLVAEGRQQGLTLSLRAIFDSPCLGDLSDQAKSLIEDNQRASTASRGNLRYDCDRIDKIVVTNSLNKADVVDVLPTTSFQRHWLDAQLKSYIVVDIPGPIDPARLLRAMHRVVEAHPILRVSFVPYETTTVQVILRTAVAITNVDLSTATVEELCRRDVDAQMAPGVPYLRVIIATQDKAGHKLIMRLSHAQYDAVSLSLLMNDLSHAYANDTHPLPSSHFPRFNDYITYQQAQRADLTATTFWRHLLQDVPLTHLNLQPAESSASNGTPITLSRDIDIAVFPSLPSDITIATMVKAAWSLALAQKTNSLAVIFGQVVHGRAIALPGVEGIVGPCANITPVVARLGLETTGLELMQALQDQHHSAMSYESVDLDDALAYANDSQAGRKGLQTIVQHQNNVMVDDMELSLGEVKCGVDFRAVDHLPKEVWVYSSVDEKRPGMLEVKIMSSTLVLGEEFAEELMGLLVEKIVGLLRHPESVCV.

The interval 225-616 (ERHAANRPHS…CGRADTQVKL (392 aa)) is adenylation 1. Positions 749 to 822 (SRLEQKIQLA…EAASLAEVQE (74 aa)) constitute a Carrier 1 domain. Serine 783 carries the post-translational modification O-(pantetheine 4'-phosphoryl)serine. The segment at 860–1291 (ENVFPCTTMQ…ALNTLSLLQA (432 aa)) is condensation 1. The adenylation 2 stretch occupies residues 1319 to 1708 (DRWVTRQPEG…GRKDTQVKLR (390 aa)). Residues 1846-1923 (TPTLELERTL…QLAAEVGEPA (78 aa)) form the Carrier 2 domain. Serine 1883 carries the post-translational modification O-(pantetheine 4'-phosphoryl)serine. Disordered stretches follow at residues 1924-1953 (GQSA…DGVD) and 1986-2012 (GGSS…KKNA). Composition is skewed to low complexity over residues 1926-1950 (SASS…STND) and 1988-2005 (SSSN…SSSS). Residues 2058-2473 (EDIYPATALQ…AVSCSDKETL (416 aa)) are condensation 2. The interval 2496-2888 (RRTPHAPAVC…IGRRDGQLKL (393 aa)) is adenylation 3. The Carrier 3 domain occupies 3024–3100 (RPVTSQEHEM…QLICHLNTIR (77 aa)). Serine 3061 is subject to O-(pantetheine 4'-phosphoryl)serine. 2 condensation regions span residues 3117 to 3582 (WVAL…TYDQ) and 3603 to 4022 (NIYP…EHLV). Positions 4047 to 4426 (HNSRQAVFDD…VGRKDNQIKF (380 aa)) are adenylation 4. The Carrier 4 domain maps to 4560–4636 (MPSTAAERKM…DLSDQAKSLI (77 aa)). Serine 4597 bears the O-(pantetheine 4'-phosphoryl)serine mark. Residues 4673–5000 (DVLPTTSFQR…LQTIVQHQNN (328 aa)) are condensation 5.

It belongs to the NRP synthetase family.

Its pathway is secondary metabolite biosynthesis. Nonribosomal peptide synthetase; part of the gene cluster that mediates the biosynthesis of malformins, cyclic pentapeptides with a disulfide bond between 2 consecutive cysteins, that show potential anti-tumor as well as antimalarial and antitrypanosomal properties. The nonribosomal peptide synthetase mlfA is responsible of the formation of the cyclic pentapeptide. The malformin biosynthesis clusters in malformin-producing fungi also contain enzymes involved in the formation of the disulfide bond between the two consecutive cysteins within malformins, in addition to additional tailoring enzymes such as methyltransferases or oxidoreductases. They are also composed of up to 4 major facilitator superfamily transporters, and transcription factors probably involved in the regulation of the expression of those clusters. This is Malformin synthetase mlfA from Aspergillus luchuensis (strain CBS 106.47).